Here is a 758-residue protein sequence, read N- to C-terminus: Long-chain-alcohol oxidase FAO1 (758 aa).

2 helical membrane passes run 102–122 (IVLR…LVCL) and 155–175 (PLAR…YFTW). 246 to 261 (CDAVVVGSGCGGGVAA) provides a ligand contact to FAD. The Proton acceptor role is filled by histidine 689.

The protein belongs to the GMC oxidoreductase family.

It is found in the membrane. The catalysed reaction is a long-chain primary fatty alcohol + O2 = a long-chain fatty aldehyde + H2O2. In terms of biological role, long-chain fatty alcohol oxidase involved in the omega-oxidation pathway of lipid degradation. The chain is Long-chain-alcohol oxidase FAO1 (FAO1) from Arabidopsis thaliana (Mouse-ear cress).